Here is a 1032-residue protein sequence, read N- to C-terminus: Integrin alpha-4 (1032 aa).

The N-terminal stretch at 1 to 34 is a signal peptide; sequence MIRDLGKVGKVSLLLDHIWTGILLYTVILTPADC. At 35–974 the chain is on the extracellular side; it reads YNIDESSPML…LHNLKPKKHV (940 aa). 7 FG-GAP repeats span residues 36–100, 113–177, 186–237, 238–291, 292–351, 353–411, and 415–477; these read NIDE…PNRT, KCGK…TELS, DHVR…TIKS, YVDL…EKQL, TILF…GAME, LKFE…GITP, and QRLQ…LPST. Asparagine 81 and asparagine 98 each carry an N-linked (GlcNAc...) asparagine glycan. Intrachain disulfides connect cysteine 91–cysteine 101, cysteine 144–cysteine 165, and cysteine 183–cysteine 198. The N-linked (GlcNAc...) asparagine glycan is linked to asparagine 229. Positions 314, 316, 318, 320, 322, 376, 378, 380, 384, 438, 440, 442, 444, and 446 each coordinate Ca(2+). Asparagine 479 is a glycosylation site (N-linked (GlcNAc...) asparagine). An intrachain disulfide couples cysteine 485 to cysteine 494. 5 N-linked (GlcNAc...) asparagine glycosylation sites follow: asparagine 496, asparagine 517, asparagine 537, asparagine 626, and asparagine 660. Disulfide bonds link cysteine 500-cysteine 556 and cysteine 622-cysteine 627. Cysteine 698 and cysteine 712 are oxidised to a cystine. 2 N-linked (GlcNAc...) asparagine glycosylation sites follow: asparagine 746 and asparagine 857. 2 disulfide bridges follow: cysteine 853/cysteine 889 and cysteine 896/cysteine 901. The chain crosses the membrane as a helical span at residues 975 to 998; the sequence is IYMIIGISLLLGILLFSLLTYILW. Residues 999–1032 lie on the Cytoplasmic side of the membrane; that stretch reads KVGFFRRKYQPIGTEETSRRESWNYLNKDEKEVK. The GFFKR motif motif lies at 1001–1005; that stretch reads GFFRR.

It belongs to the integrin alpha chain family. In terms of assembly, heterodimer of an alpha and a beta subunit.

The protein resides in the membrane. In terms of biological role, fibronectin and V-CAM adhesion receptor. The polypeptide is Integrin alpha-4 (itga4) (Xenopus laevis (African clawed frog)).